The sequence spans 280 residues: Acyl-[acyl-carrier-protein]--UDP-N-acetylglucosamine O-acyltransferase (280 aa).

It belongs to the transferase hexapeptide repeat family. LpxA subfamily. Homotrimer.

Its subcellular location is the cytoplasm. It carries out the reaction a (3R)-hydroxyacyl-[ACP] + UDP-N-acetyl-alpha-D-glucosamine = a UDP-3-O-[(3R)-3-hydroxyacyl]-N-acetyl-alpha-D-glucosamine + holo-[ACP]. It functions in the pathway glycolipid biosynthesis; lipid IV(A) biosynthesis; lipid IV(A) from (3R)-3-hydroxytetradecanoyl-[acyl-carrier-protein] and UDP-N-acetyl-alpha-D-glucosamine: step 1/6. Involved in the biosynthesis of lipid A, a phosphorylated glycolipid that anchors the lipopolysaccharide to the outer membrane of the cell. The protein is Acyl-[acyl-carrier-protein]--UDP-N-acetylglucosamine O-acyltransferase of Chlamydia trachomatis serovar A (strain ATCC VR-571B / DSM 19440 / HAR-13).